We begin with the raw amino-acid sequence, 870 residues long: Leucine--tRNA ligase (870 aa).

A 'HIGH' region motif is present at residues 55–65 (PYPSGTLHMGH). A 'KMSKS' region motif is present at residues 626 to 630 (KMSKS). Lysine 629 lines the ATP pocket.

It belongs to the class-I aminoacyl-tRNA synthetase family.

The protein resides in the cytoplasm. It catalyses the reaction tRNA(Leu) + L-leucine + ATP = L-leucyl-tRNA(Leu) + AMP + diphosphate. The polypeptide is Leucine--tRNA ligase (Prochlorococcus marinus (strain SARG / CCMP1375 / SS120)).